Here is a 770-residue protein sequence, read N- to C-terminus: U3 small nucleolar RNA-associated protein 14 homolog A (770 aa).

The span at 1 to 17 (MNANQAAESNLLASNQQ) shows a compositional bias: polar residues. The segment at 1-65 (MNANQAAESN…GKDRQKLADR (65 aa)) is disordered. A phosphoserine mark is found at serine 30, serine 32, and serine 53. The stretch at 41-68 (ERKHQKLLESISSLNGKDRQKLADRSEA) forms a coiled coil. The span at 56–65 (GKDRQKLADR) shows a compositional bias: basic and acidic residues. Serine 78 and serine 82 each carry phosphoserine. Threonine 206 is subject to Phosphothreonine. Coiled-coil stretches lie at residues 217–291 (SLEE…DKAR) and 318–348 (LEAR…EEEG). Disordered regions lie at residues 334-361 (LTQK…LVPD), 392-455 (KDLE…SSQE), and 467-505 (LRTE…RPER). Acidic residues-rich tracts occupy residues 343–358 (ESEE…EEPL) and 396–410 (DPAE…ESEE). Phosphoserine occurs at positions 406 and 408. Residues 411-444 (EKAVVEEETLLKEFEERRSLRQKSELNHMAEPVH) are compositionally biased toward basic and acidic residues. Lysine 449 is covalently cross-linked (Glycyl lysine isopeptide (Lys-Gly) (interchain with G-Cter in SUMO2)). Serine 453 is modified (phosphoserine). Serine 567 carries the phosphoserine modification. Arginine 588 is subject to Citrulline. Residue lysine 732 forms a Glycyl lysine isopeptide (Lys-Gly) (interchain with G-Cter in SUMO2) linkage.

The protein belongs to the UTP14 family. In terms of assembly, interacts with DHX37. In terms of processing, citrullinated by PADI4.

It localises to the nucleus. The protein resides in the nucleolus. In terms of biological role, may be required for ribosome biogenesis. The protein is U3 small nucleolar RNA-associated protein 14 homolog A (UTP14A) of Bos taurus (Bovine).